Reading from the N-terminus, the 589-residue chain is NADPH-dependent diflavin oxidoreductase 1 (589 aa).

The Flavodoxin-like domain occupies 5 to 151 (ITILYGSETG…YYIEWEAELI (147 aa)). Residues 11–16 (SETGNA), 60–63 (STTG), 98–107 (VGDSSYVKYN), and Glu-133 each bind FMN. Residues 202-439 (DGLKLGTVLE…SIQRSSFKYK (238 aa)) form the FAD-binding FR-type domain. FAD is bound by residues Arg-349, 380-383 (RMFS), and 412-415 (GVCT). Residues Thr-452 and 507 to 508 (SR) each bind NADP(+). Trp-589 contributes to the FAD binding site.

Belongs to the NADPH-dependent diflavin oxidoreductase NDOR1 family. The protein in the N-terminal section; belongs to the flavodoxin family. It in the C-terminal section; belongs to the flavoprotein pyridine nucleotide cytochrome reductase family. Interacts with DRE2; as part of the cytosolic iron-sulfur (Fe-S) protein assembly (CIA) machinery. The cofactor is FAD. FMN is required as a cofactor.

It is found in the cytoplasm. Its subcellular location is the mitochondrion. The catalysed reaction is 2 oxidized [2Fe-2S]-[protein] + NADPH = 2 reduced [2Fe-2S]-[protein] + NADP(+) + H(+). NADPH-dependent reductase which is a central component of the cytosolic iron-sulfur (Fe-S) protein assembly (CIA) machinery. Transfers electrons from NADPH via its FAD and FMN prosthetic groups to the [2Fe-2S] cluster of DRE2, another key component of the CIA machinery. In turn, this reduced cluster provides electrons for assembly of cytosolic iron-sulfur cluster proteins. Positively controls H(2)O(2)-induced cell death. The polypeptide is NADPH-dependent diflavin oxidoreductase 1 (Candida albicans (strain SC5314 / ATCC MYA-2876) (Yeast)).